The primary structure comprises 468 residues: Probable Xaa-Pro aminopeptidase PEPP (468 aa).

The Mn(2+) site is built by Asp264, Asp275, Glu398, and Glu438.

Belongs to the peptidase M24B family. It depends on Mn(2+) as a cofactor.

It catalyses the reaction Release of any N-terminal amino acid, including proline, that is linked to proline, even from a dipeptide or tripeptide.. Functionally, catalyzes the removal of a penultimate prolyl residue from the N-termini of peptides. The protein is Probable Xaa-Pro aminopeptidase PEPP (PEPP) of Paracoccidioides lutzii (strain ATCC MYA-826 / Pb01) (Paracoccidioides brasiliensis).